We begin with the raw amino-acid sequence, 65 residues long: Large ribosomal subunit protein bL35 (65 aa).

The segment at 23–44 is disordered; sequence KRMKAGKQHILTKKSQKTKRNL.

It belongs to the bacterial ribosomal protein bL35 family.

This is Large ribosomal subunit protein bL35 from Lachnoclostridium phytofermentans (strain ATCC 700394 / DSM 18823 / ISDg) (Clostridium phytofermentans).